Reading from the N-terminus, the 224-residue chain is Propanediol dehydratase medium subunit (224 aa).

The segment at 1-18 (MEINEKLLRQIIEDVLRD) is targets protein to the BMC.

It belongs to the diol/glycerol dehydratase medium subunit family. The propanediol dehydratase enzyme is a heterotrimeric complex composed of a large (PduC), a medium (PduD) and a small (PduE) subunit. Requires adenosylcob(III)alamin as cofactor.

Its subcellular location is the bacterial microcompartment. It carries out the reaction propane-1,2-diol = propanal + H2O. Its pathway is polyol metabolism; 1,2-propanediol degradation. With respect to regulation, inhibited by glycerol. In terms of biological role, part of the PduCDE complex that catalyzes the dehydration of 1,2-propanediol (1,2-PD) to propionaldehyde. Required for S.typhimurium growth on 1,2-PD as the sole carbon and energy source. This subunit is directly targeted to the bacterial microcompartment (BMC) dedicated to 1,2-PD degradation, and is also responsible for targeting the other 2 subunits (pduC and pduE). The 1,2-PD-specific bacterial microcompartment (BMC) concentrates low levels of 1,2-PD catabolic enzymes, concentrates volatile reaction intermediates thus enhancing pathway flux and keeps the level of toxic, mutagenic propionaldehyde low. The chain is Propanediol dehydratase medium subunit from Salmonella typhimurium (strain LT2 / SGSC1412 / ATCC 700720).